The primary structure comprises 545 residues: Chaperonin GroEL (545 aa).

Residues 29 to 32, lysine 50, 86 to 90, glycine 413, and aspartate 495 contribute to the ATP site; these read TLGP and DGTTT.

It belongs to the chaperonin (HSP60) family. As to quaternary structure, forms a cylinder of 14 subunits composed of two heptameric rings stacked back-to-back. Interacts with the co-chaperonin GroES.

The protein localises to the cytoplasm. The enzyme catalyses ATP + H2O + a folded polypeptide = ADP + phosphate + an unfolded polypeptide.. Functionally, together with its co-chaperonin GroES, plays an essential role in assisting protein folding. The GroEL-GroES system forms a nano-cage that allows encapsulation of the non-native substrate proteins and provides a physical environment optimized to promote and accelerate protein folding. In Borreliella afzelii (strain PKo) (Borrelia afzelii), this protein is Chaperonin GroEL.